A 459-amino-acid polypeptide reads, in one-letter code: Phosphomethylpyrimidine synthase (459 aa).

Substrate contacts are provided by residues asparagine 80, methionine 109, tyrosine 139, histidine 175, 195-197 (SRG), 236-239 (DSLR), and glutamate 275. Zn(2+) is bound at residue histidine 279. Tyrosine 302 lines the substrate pocket. Histidine 343 contacts Zn(2+). The [4Fe-4S] cluster site is built by cysteine 423, cysteine 426, and cysteine 431.

Belongs to the ThiC family. The cofactor is [4Fe-4S] cluster.

It catalyses the reaction 5-amino-1-(5-phospho-beta-D-ribosyl)imidazole + S-adenosyl-L-methionine = 4-amino-2-methyl-5-(phosphooxymethyl)pyrimidine + CO + 5'-deoxyadenosine + formate + L-methionine + 3 H(+). Its pathway is cofactor biosynthesis; thiamine diphosphate biosynthesis. In terms of biological role, catalyzes the synthesis of the hydroxymethylpyrimidine phosphate (HMP-P) moiety of thiamine from aminoimidazole ribotide (AIR) in a radical S-adenosyl-L-methionine (SAM)-dependent reaction. The protein is Phosphomethylpyrimidine synthase of Synechocystis sp. (strain ATCC 27184 / PCC 6803 / Kazusa).